The sequence spans 65 residues: MPKMKSKSSAKMRFSVRAGGTIKRGQAFKRHILTKKTTKNKRHLRGSAEVAKADIKSIRSMLPYA.

The span at 1 to 10 (MPKMKSKSSA) shows a compositional bias: basic residues. Residues 1-21 (MPKMKSKSSAKMRFSVRAGGT) form a disordered region.

Belongs to the bacterial ribosomal protein bL35 family.

In Polynucleobacter necessarius subsp. necessarius (strain STIR1), this protein is Large ribosomal subunit protein bL35.